A 323-amino-acid chain; its full sequence is tRNA U34 carboxymethyltransferase (323 aa).

Carboxy-S-adenosyl-L-methionine contacts are provided by residues K91, W105, K110, G130, 152–154 (DPS), 181–182 (IE), M196, Y200, and R315.

It belongs to the class I-like SAM-binding methyltransferase superfamily. CmoB family. Homotetramer.

It catalyses the reaction carboxy-S-adenosyl-L-methionine + 5-hydroxyuridine(34) in tRNA = 5-carboxymethoxyuridine(34) in tRNA + S-adenosyl-L-homocysteine + H(+). Functionally, catalyzes carboxymethyl transfer from carboxy-S-adenosyl-L-methionine (Cx-SAM) to 5-hydroxyuridine (ho5U) to form 5-carboxymethoxyuridine (cmo5U) at position 34 in tRNAs. This chain is tRNA U34 carboxymethyltransferase, found in Vibrio campbellii (strain ATCC BAA-1116).